A 256-amino-acid polypeptide reads, in one-letter code: Acetyl-coenzyme A carboxylase carboxyl transferase subunit alpha (256 aa).

The region spanning 1 to 236 (MSDVARILKE…KTAIVDELAE (236 aa)) is the CoA carboxyltransferase C-terminal domain.

It belongs to the AccA family. In terms of assembly, acetyl-CoA carboxylase is a heterohexamer composed of biotin carboxyl carrier protein (AccB), biotin carboxylase (AccC) and two subunits each of ACCase subunit alpha (AccA) and ACCase subunit beta (AccD).

The protein resides in the cytoplasm. It catalyses the reaction N(6)-carboxybiotinyl-L-lysyl-[protein] + acetyl-CoA = N(6)-biotinyl-L-lysyl-[protein] + malonyl-CoA. Its pathway is lipid metabolism; malonyl-CoA biosynthesis; malonyl-CoA from acetyl-CoA: step 1/1. Its function is as follows. Component of the acetyl coenzyme A carboxylase (ACC) complex. First, biotin carboxylase catalyzes the carboxylation of biotin on its carrier protein (BCCP) and then the CO(2) group is transferred by the carboxyltransferase to acetyl-CoA to form malonyl-CoA. The chain is Acetyl-coenzyme A carboxylase carboxyl transferase subunit alpha from Streptococcus thermophilus (strain CNRZ 1066).